A 211-amino-acid chain; its full sequence is ATP phosphoribosyltransferase (211 aa).

Belongs to the ATP phosphoribosyltransferase family. Short subfamily. Heteromultimer composed of HisG and HisZ subunits.

The protein localises to the cytoplasm. It catalyses the reaction 1-(5-phospho-beta-D-ribosyl)-ATP + diphosphate = 5-phospho-alpha-D-ribose 1-diphosphate + ATP. It functions in the pathway amino-acid biosynthesis; L-histidine biosynthesis; L-histidine from 5-phospho-alpha-D-ribose 1-diphosphate: step 1/9. In terms of biological role, catalyzes the condensation of ATP and 5-phosphoribose 1-diphosphate to form N'-(5'-phosphoribosyl)-ATP (PR-ATP). Has a crucial role in the pathway because the rate of histidine biosynthesis seems to be controlled primarily by regulation of HisG enzymatic activity. This chain is ATP phosphoribosyltransferase, found in Bacillus cereus (strain AH187).